The following is a 1203-amino-acid chain: Serine/threonine-protein kinase Nek1 (1203 aa).

In terms of domain architecture, Protein kinase spans 4 to 258 (YVRLQKIGEG…VNSILEKGFI (255 aa)). Residues 10–18 (IGEGSFGKA) and Lys-33 contribute to the ATP site. The active-site Proton acceptor is the Asp-128. Position 156 is a phosphothreonine (Thr-156). A Phosphothreonine; by autocatalysis modification is found at Thr-162. A disordered region spans residues 329–357 (LLEKKPPPKHKQAHQIPVKKMNSGEERKK). Phosphoserine is present on residues Ser-417 and Ser-437. Residue Thr-615 is modified to Phosphothreonine. Ser-618 is subject to Phosphoserine. Disordered stretches follow at residues 643–662 (LTDT…SSKR) and 674–708 (AQED…ISSD). The segment covering 674 to 683 (AQEDEKEKQH) has biased composition (basic and acidic residues). A phosphoserine mark is found at Ser-750, Ser-786, Ser-820, and Ser-832. Disordered regions lie at residues 814 to 866 (PSAT…LPPV) and 888 to 925 (AVQQ…GCDV). Residues 839–850 (NVEEPDDLETEV) are compositionally biased toward acidic residues. Residue Ser-997 is modified to Phosphoserine. 2 disordered regions span residues 1021 to 1045 (SLEI…TVFE) and 1063 to 1120 (REQP…ETTS). Position 1071 is a phosphoserine (Ser-1071).

This sequence belongs to the protein kinase superfamily. NEK Ser/Thr protein kinase family. NIMA subfamily. In terms of assembly, binds to CBY2. Found in a complex with CFAP410, NEK1 and SPATA7. Interacts with CFAP410. Interacts (via Ser-997 phosphorylated form) with 14-3-3 proteins. Mg(2+) is required as a cofactor. In terms of tissue distribution, predominantly in testes (germ cells and Sertoli cells). Lower levels in ovary (oocytes and granulosa cells), thymus and lung.

Its subcellular location is the nucleus. The protein resides in the cytoplasm. It is found in the cytoskeleton. The protein localises to the microtubule organizing center. It localises to the centrosome. It catalyses the reaction L-seryl-[protein] + ATP = O-phospho-L-seryl-[protein] + ADP + H(+). The catalysed reaction is L-threonyl-[protein] + ATP = O-phospho-L-threonyl-[protein] + ADP + H(+). Functionally, phosphorylates serines and threonines, but also appears to possess tyrosine kinase activity. Involved in DNA damage checkpoint control and for proper DNA damage repair. In response to injury that includes DNA damage, NEK1 phosphorylates VDAC1 to limit mitochondrial cell death. May be implicated in the control of meiosis. Involved in cilium assembly. This chain is Serine/threonine-protein kinase Nek1 (Nek1), found in Mus musculus (Mouse).